Consider the following 68-residue polypeptide: Protein transport protein Sec61 subunit gamma (68 aa).

The Cytoplasmic segment spans residues 1–32 (MDQVTKFIEPGRQFAKDSIRLVKRCTKPDRKE). Residues 33–61 (FQKIAVATAIGFCIMGFIGFFVKLIHIPI) form a helical membrane-spanning segment. The Extracellular segment spans residues 62–68 (NNIIVGS).

Belongs to the SecE/SEC61-gamma family. In terms of assembly, heterotrimeric complex composed of SEC61-alpha, SEC61-beta and SEC61-gamma.

The protein resides in the endoplasmic reticulum membrane. Functionally, necessary for protein translocation in the endoplasmic reticulum. The chain is Protein transport protein Sec61 subunit gamma (SEC61G) from Gryllotalpa orientalis (Oriental mole cricket).